The chain runs to 343 residues: Phosphoribosylformylglycinamidine cyclo-ligase (343 aa).

The protein belongs to the AIR synthase family.

The protein resides in the cytoplasm. The catalysed reaction is 2-formamido-N(1)-(5-O-phospho-beta-D-ribosyl)acetamidine + ATP = 5-amino-1-(5-phospho-beta-D-ribosyl)imidazole + ADP + phosphate + H(+). It functions in the pathway purine metabolism; IMP biosynthesis via de novo pathway; 5-amino-1-(5-phospho-D-ribosyl)imidazole from N(2)-formyl-N(1)-(5-phospho-D-ribosyl)glycinamide: step 2/2. This Parasynechococcus marenigrum (strain WH8102) protein is Phosphoribosylformylglycinamidine cyclo-ligase.